The following is a 239-amino-acid chain: Cyclo(L-leucyl-L-phenylalanyl) synthase (239 aa).

Residue Ser37 is the Nucleophile of the active site. Substrate-binding positions include Asn40, 178-182 (YVLAE), and Tyr202.

Belongs to the CDPS family. As to quaternary structure, monomer.

The enzyme catalyses L-phenylalanyl-tRNA(Phe) + L-leucyl-tRNA(Leu) = cyclo(L-phenylalanyl-L-leucyl) + tRNA(Phe) + tRNA(Leu) + H(+). Functionally, involved in the biosynthesis of albonoursin (cyclo[(alpha,beta-dehydro-Phe)-(alpha,beta-dehydro-Leu)]), an antibacterial peptide. It uses activated amino acids in the form of aminoacyl-tRNAs (aa-tRNAs) as substrates to catalyze the ATP-independent formation of cyclodipeptides which are intermediates in diketopiperazine (DKP) biosynthetic pathways. Catalyzes the formation of cyclo(L-Phe-L-Leu) (cFL) as major products from L-L-phenylalanyl-tRNA(Phe) and L-leucyl-tRNA(Leu). AlbC can also incorporate various nonpolar residues, such as L-phenylalanine, L-leucine, L-tyrosine and L-methionine, and to a much lesser extent L-alanine and L-valine, into cyclodipeptides. Indeed, ten possible cyclodipeptides composed of L-phenylalanine, L-leucine, L-tyrosine and L-methionine are all synthesized to detectable amounts by AlbC. The sequence is that of Cyclo(L-leucyl-L-phenylalanyl) synthase (albC) from Streptomyces noursei (Streptomyces albulus).